The chain runs to 355 residues: Glycerol-1-phosphate dehydrogenase [NAD(P)+] (355 aa).

Residues 101–105 and 123–126 each bind NAD(+); these read GKSID and TAAS. Residue aspartate 128 participates in substrate binding. Serine 132 contributes to the NAD(+) binding site. Substrate is bound at residue aspartate 175. Positions 175 and 255 each coordinate Zn(2+). Histidine 259 is a substrate binding site. Residue histidine 271 coordinates Zn(2+).

Belongs to the glycerol-1-phosphate dehydrogenase family. Homodimer. Zn(2+) serves as cofactor.

It localises to the cytoplasm. It carries out the reaction sn-glycerol 1-phosphate + NAD(+) = dihydroxyacetone phosphate + NADH + H(+). It catalyses the reaction sn-glycerol 1-phosphate + NADP(+) = dihydroxyacetone phosphate + NADPH + H(+). The protein operates within membrane lipid metabolism; glycerophospholipid metabolism. Catalyzes the NAD(P)H-dependent reduction of dihydroxyacetonephosphate (DHAP or glycerone phosphate) to glycerol 1-phosphate (G1P). The G1P thus generated is used as the glycerophosphate backbone of phospholipids in the cellular membranes of Archaea. The protein is Glycerol-1-phosphate dehydrogenase [NAD(P)+] of Staphylothermus marinus (strain ATCC 43588 / DSM 3639 / JCM 9404 / F1).